The following is a 201-amino-acid chain: Hydroxymethylphosphonate dioxygenase (201 aa).

Residues histidine 47, histidine 71, aspartate 72, histidine 94, histidine 117, and aspartate 174 each coordinate Fe cation.

Fe(2+) serves as cofactor.

It catalyses the reaction hydroxymethylphosphonate + O2 = formate + phosphate + 2 H(+). The catalysed reaction is (1R)-(2-amino-1-hydroxyethyl)phosphonate + O2 = glycine + phosphate + 2 H(+). It carries out the reaction (1R)-(1-hydroxyethyl)phosphonate + O2 = acetate + phosphate + 2 H(+). In terms of biological role, part of an oxidative pathway for utilization of methylphosphonic acid as a phosphate source. Catalyzes the oxidation of hydroxymethylphosphonic acid to produce formate and phosphate. Can also use (1R)-(2-amino-1-hydroxyethyl)phosphonic acid and (R)-1-hydroxyethylphosphonic acid with similar catalytic efficiency. The chain is Hydroxymethylphosphonate dioxygenase from Gimesia maris (strain ATCC 29201 / DSM 8797 / 534-30) (Planctomyces maris).